A 393-amino-acid chain; its full sequence is Ferrochelatase, mitochondrial (393 aa).

Residues 1–31 (MLSRTIRTQGSFLRRSQLTITRSFSVTFNMQ) constitute a mitochondrion transit peptide. Residue D351 is part of the active site.

This sequence belongs to the ferrochelatase family. The leader peptide may be processed in two proteolytic steps, first between Ser-23 and Phe-24, second and by a different protease, to yield the mature protein.

It localises to the mitochondrion inner membrane. It catalyses the reaction heme b + 2 H(+) = protoporphyrin IX + Fe(2+). The protein operates within porphyrin-containing compound metabolism; protoheme biosynthesis; protoheme from protoporphyrin-IX: step 1/1. In terms of biological role, catalyzes the ferrous insertion into protoporphyrin IX. In Saccharomyces cerevisiae (strain ATCC 204508 / S288c) (Baker's yeast), this protein is Ferrochelatase, mitochondrial (HEM15).